The following is a 247-amino-acid chain: PF03932 family protein CutC (247 aa).

It belongs to the CutC family.

Its subcellular location is the cytoplasm. The sequence is that of PF03932 family protein CutC from Klebsiella pneumoniae (strain 342).